The primary structure comprises 531 residues: UDP-glucuronosyltransferase 1A6 (531 aa).

An N-terminal signal peptide occupies residues Met-1–Gly-26. N-linked (GlcNAc...) asparagine glycans are attached at residues Asn-293 and Asn-431. Residues Val-489–Phe-505 traverse the membrane as a helical segment.

The protein belongs to the UDP-glycosyltransferase family. As to expression, expressed in liver, kidney and at very low levels in colon.

The protein localises to the microsome. It localises to the endoplasmic reticulum membrane. It catalyses the reaction glucuronate acceptor + UDP-alpha-D-glucuronate = acceptor beta-D-glucuronoside + UDP + H(+). It carries out the reaction (5Z,8Z,11Z,14Z)-eicosatetraenoate + UDP-alpha-D-glucuronate = O-[(5Z),(8Z),(11Z),(14Z)-eicosatetraenoyl]-beta-D-glucuronate + UDP. The catalysed reaction is 15-hydroxy-(5Z,8Z,11Z,13E)-eicosatetraenoate + UDP-alpha-D-glucuronate = 15-O-(beta-D-glucuronosyl)-(5Z,8Z,11Z,14Z)-eicosatetraenoate + UDP + H(+). The enzyme catalyses (E)-ferulate + UDP-alpha-D-glucuronate = (E)-4-O-(beta-D-glucuronosyl)-ferulate + UDP + H(+). It catalyses the reaction (E)-ferulate + UDP-alpha-D-glucuronate = (E)-ferulic acid beta-D-glucuronate ester + UDP. In terms of biological role, UDP-glucuronosyltransferase (UGT) that catalyzes phase II biotransformation reactions in which lipophilic substrates are conjugated with glucuronic acid to facilitate their inactivation and excretion from the body. Essential for the elimination and detoxification of drugs, xenobiotics and endogenous compounds. Involved in the glucuronidation of arachidonic acid (AA) and AA-derived eicosanoids including 15-HETE and 20-HETE. Conjugates small planar phenolic molecules such as 4-nitrophenol, 1-naphthol, and 4-methylumbelliferone. The bulky phenol 4-hydroxybiphenyl, androgens and estrogens are not substrates. 2-hydroxybiphenyl is an excellent substrate. Involved in the glucuronidation of the phytochemical ferulic acid at the phenolic or the carboxylic acid group. This chain is UDP-glucuronosyltransferase 1A6, found in Mus musculus (Mouse).